The chain runs to 157 residues: uncharacterized protein (157 aa).

Lysine 115 is covalently cross-linked (Isoglutamyl lysine isopeptide (Lys-Gln) (interchain with Q-Cter in protein Pup)).

This is an uncharacterized protein from Mycolicibacterium smegmatis (strain ATCC 700084 / mc(2)155) (Mycobacterium smegmatis).